A 338-amino-acid polypeptide reads, in one-letter code: Putative clathrin assembly protein At5g10410 (338 aa).

The ENTH domain occupies 27 to 157; sequence FGSTAVKYIH…WVPKVLGSFP (131 aa).

The protein localises to the membrane. It localises to the clathrin-coated pit. The protein resides in the golgi apparatus. Its subcellular location is the cytoplasmic vesicle. It is found in the clathrin-coated vesicle. The polypeptide is Putative clathrin assembly protein At5g10410 (Arabidopsis thaliana (Mouse-ear cress)).